We begin with the raw amino-acid sequence, 352 residues long: Homeobox protein Mohawk (352 aa).

The interval 19–54 (GASERERGGRPYSGVLDSPHARPEVGIPDGPPLKDN) is disordered. Residues 71-132 (VRHKRQALQD…NARRRLKNTV (62 aa)) constitute a DNA-binding region (homeobox; TALE-type). Disordered regions lie at residues 159–189 (VSSD…VHHP) and 245–301 (TRQR…PSKD).

This sequence belongs to the TALE/IRO homeobox family.

The protein localises to the nucleus. In terms of biological role, may act as a morphogenetic regulator of cell adhesion. This is Homeobox protein Mohawk (MKX) from Homo sapiens (Human).